The chain runs to 187 residues: Elongation factor P (187 aa).

This sequence belongs to the elongation factor P family.

It is found in the cytoplasm. It participates in protein biosynthesis; polypeptide chain elongation. In terms of biological role, involved in peptide bond synthesis. Stimulates efficient translation and peptide-bond synthesis on native or reconstituted 70S ribosomes in vitro. Probably functions indirectly by altering the affinity of the ribosome for aminoacyl-tRNA, thus increasing their reactivity as acceptors for peptidyl transferase. The polypeptide is Elongation factor P (Roseiflexus sp. (strain RS-1)).